We begin with the raw amino-acid sequence, 249 residues long: Dihydroneopterin 2',3'-cyclic phosphate phosphodiesterase (249 aa).

An HD domain is found at 58–172 (LIEHTISVTK…VHYADEADSK (115 aa)).

As to quaternary structure, homododecamer. The cofactor is Fe(2+). Zn(2+) serves as cofactor.

The catalysed reaction is 7,8-dihydroneopterin 2',3'-cyclic phosphate + H2O = 7,8-dihydroneopterin 3'-phosphate + H(+). The enzyme catalyses 7,8-dihydroneopterin 2',3'-cyclic phosphate + H2O = 7,8-dihydroneopterin 2'-phosphate + H(+). The protein operates within cofactor biosynthesis; 5,6,7,8-tetrahydromethanopterin biosynthesis. In terms of biological role, cyclic phosphodiesterase that hydrolyzes the cyclic phosphate of 7,8-dihydroneopterin 2',3'-cyclic phosphate (H2N-cP) and converts it to a mixture of 7,8-dihydroneopterin 2'-phosphate (H2N-2'P) and 7,8-dihydroneopterin 3'-phosphate (H2N-3'P). Is also able to utilize other phosphodiesters as substrates in vitro: hydrolysis of bis-pNPP and pNPPC produces nitrophenyl phosphate, and that of 2',3'-cAMP produces 3'-AMP. ATP, 3',5'-cAMP, GTP, 3',5'-cGMP, and 4',5'-cFMN cannot serve as substrates. The chain is Dihydroneopterin 2',3'-cyclic phosphate phosphodiesterase (mptB) from Methanocaldococcus jannaschii (strain ATCC 43067 / DSM 2661 / JAL-1 / JCM 10045 / NBRC 100440) (Methanococcus jannaschii).